A 372-amino-acid chain; its full sequence is Cytochrome b (372 aa).

4 helical membrane passes run 25-45 (FGSM…FLAI), 69-90 (WIMQ…YIHI), 105-125 (WFSG…GYVL), and 170-190 (FFAL…IHII). Heme b is bound by residues histidine 75 and histidine 89. Heme b is bound by residues histidine 174 and histidine 188. Histidine 193 lines the a ubiquinone pocket. Transmembrane regions (helical) follow at residues 218–238 (YKDM…LSFM), 280–300 (LGGT…PFTH), 312–332 (LAQT…WTAT), and 339–358 (FILI…IMNP).

Belongs to the cytochrome b family. As to quaternary structure, the cytochrome bc1 complex contains 3 respiratory subunits (MT-CYB, CYC1 and UQCRFS1), 2 core proteins (UQCRC1 and UQCRC2) and probably 6 low-molecular weight proteins. Requires heme b as cofactor.

It localises to the mitochondrion inner membrane. In terms of biological role, component of the ubiquinol-cytochrome c reductase complex (complex III or cytochrome b-c1 complex) that is part of the mitochondrial respiratory chain. The b-c1 complex mediates electron transfer from ubiquinol to cytochrome c. Contributes to the generation of a proton gradient across the mitochondrial membrane that is then used for ATP synthesis. The sequence is that of Cytochrome b (MT-CYB) from Sinomicrurus japonicus (Coral snake).